The following is a 959-amino-acid chain: E3 ubiquitin-protein ligase arkadia-B (959 aa).

The span at 51–66 (CSDTNKQQSDLNSNGT) shows a compositional bias: polar residues. Disordered stretches follow at residues 51 to 171 (CSDT…VSSL), 189 to 212 (RKRF…MLQR), and 225 to 271 (LLPS…SGGM). Low complexity predominate over residues 112–131 (SSFSDCISSPSSSSHFGDSD). Over residues 142-156 (PLSSVNSTPRTQSAR) the composition is skewed to polar residues. The span at 228–246 (SSSSSSENDLSSESSSSSS) shows a compositional bias: low complexity. Over residues 256 to 267 (TGENRQDGTTLP) the composition is skewed to polar residues. Positions 275–279 (VVVIE) match the SUMO interaction motif 1 (SIM) motif. The short motif at 300–306 (EVEIVTV) is the SUMO interaction motif 2 (SIM) element. Positions 318-341 (HPRSHWGQNSQSGRTQEQRTRNRV) are disordered. The span at 323–332 (WGQNSQSGRT) shows a compositional bias: polar residues. Positions 355–359 (VVDLT) match the SUMO interaction motif 3 (SIM) motif. A compositionally biased stretch (polar residues) spans 370 to 397 (TTSGRVESQPVSIVSSLTSTSEPASDSM). Disordered regions lie at residues 370–399 (TTSG…SMSG), 475–499 (HFPH…SFRD), 615–649 (PRPL…MDYV), and 661–680 (PSLT…HLSA). The span at 475–487 (HFPHHHHHHHHSS) shows a compositional bias: basic residues. The span at 620-632 (HQTSSCPHSNSAS) shows a compositional bias: polar residues. The segment covering 633–646 (QPPPPPPPPPPPPM) has biased composition (pro residues). Residues 872–874 (YPH) are ubiquitin binding. Zn(2+) contacts are provided by C907 and C910. An RING-type; atypical zinc finger spans residues 907-948 (CTICLSILEEGEDVRRLPCMHLFHQVCVDQWLITNKKCPICR). The segment at 922–926 (RLPCM) is ubiquitin binding. 2 residues coordinate Zn(2+): H930 and C933.

This sequence belongs to the Arkadia family. Monomer.

Its subcellular location is the nucleus. It is found in the cytoplasm. It localises to the PML body. The enzyme catalyses S-ubiquitinyl-[E2 ubiquitin-conjugating enzyme]-L-cysteine + [acceptor protein]-L-lysine = [E2 ubiquitin-conjugating enzyme]-L-cysteine + N(6)-ubiquitinyl-[acceptor protein]-L-lysine.. It functions in the pathway protein modification; protein ubiquitination. With respect to regulation, binds free ubiquitin non-covalently via its RING-type zinc finger. Ubiquitin-binding leads to enhance the E3 ubiquitin-protein ligase activity by stabilizing the ubiquitin-conjugating enzyme E2 (donor ubiquitin) in the 'closed' conformation and activating ubiquitin transfer. Its function is as follows. E3 ubiquitin-protein ligase required for mesoderm patterning during embryonic development. Acts as an enhancer of the transcriptional responses of the smad2/smad3 effectors, which are activated downstream of BMP. Acts by mediating ubiquitination and degradation of SMAD inhibitors such as smad7, inducing their proteasomal degradation and thereby enhancing the transcriptional activity of TGF-beta and BMP. Specifically binds polysumoylated chains via SUMO interaction motifs (SIMs) and mediates ubiquitination of sumoylated substrates. The regulation of the BMP-SMAD signaling is however independent of sumoylation and is not dependent of SUMO interaction motifs (SIMs). The protein is E3 ubiquitin-protein ligase arkadia-B (rnf111-b) of Xenopus laevis (African clawed frog).